The following is a 61-amino-acid chain: Small ribosomal subunit protein uS14 (61 aa).

Residues cysteine 24, cysteine 27, cysteine 40, and cysteine 43 each contribute to the Zn(2+) site.

This sequence belongs to the universal ribosomal protein uS14 family. Zinc-binding uS14 subfamily. As to quaternary structure, part of the 30S ribosomal subunit. Contacts proteins S3 and S10. Zn(2+) serves as cofactor.

Functionally, binds 16S rRNA, required for the assembly of 30S particles and may also be responsible for determining the conformation of the 16S rRNA at the A site. This is Small ribosomal subunit protein uS14 from Mycoplasma capricolum subsp. capricolum (strain California kid / ATCC 27343 / NCTC 10154).